Here is an 885-residue protein sequence, read N- to C-terminus: MPEQNPLPFPDGQPSPPSTAAADTGATAAALPLAEPVPPAVAPSIAPSVAAARSGKRPWWARLLGRLADPWLSLTIEPDQPGRYDDGRPVVYVLEDYGMSNALILDKACREVGLPSPLVPLPGDPLERKRAYLALSRRSSSNSLIPEQRGGKTHSDSLAKLLQAHRVRADLDVHLVPVSIFVGRAPDKQSGWFAVLFSENWALVGRFRRLLSVLLNGRTTIVRFAPPISLRQTMAEGLPPERTLRKLQRVLRTHFRRIREAVIGPDLSTRRLLVDQVLAAESVREAIAIQAKRDNSKPVDAWRKAHAYAWEIAADYSSPVVRSASFLLTHVWNRIYAGVLVHHLDKLKQAAPGHEVVYVPSHRSHMDYLLLSYLLYERGIVPPHIVAGINLNLPVVGTLLRKGGAFFIRRSIKGNALYSAVLSEYVAQLVAGGYSIEYFVEGGRSRTGRLLQPKGGMIAMTLRAYLRQPRKPVLFQPVYIGYEKLMEGNSYLDELTGRPKEKESIWGLLWSIPKVLKQNYGQVVVNFGEPIALNDVLAKHAPDWDGQPLPEDEKPTWLAPAVDMLSTQIQTRINCAADVNPINLLALALLSTPKHAMGEADLIAQIELCKKLLAEMPYSDRVTVTPHTPARIITHAEEINVLTRVSHPLGDVLSVSGDTAVLLSYFRNNVLHLFTASSWVACCFQNNRRMSRAGLLRLGRTVYPFLQAELFLPWSEDRFAERIEQTIDMFVREGLLLNVTDDDGGILARNTGQTDEVFRLRAIGHSLQQAFERYYIAISVLVKNGPGVLGAGELESLCQQAAQRLSLLYAPAAPEFFDKTLFRGFIQKLRELRLVWPDENSKLMFDERLDAWAKDAKFILGRELRHTIERVSPAAAKPDVVVPPQ.

Residues 1 to 17 (MPEQNPLPFPDGQPSPP) are compositionally biased toward pro residues. A disordered region spans residues 1-26 (MPEQNPLPFPDGQPSPPSTAAADTGA). The HXXXXD motif signature appears at 362–367 (HRSHMD).

Belongs to the GPAT/DAPAT family.

Its subcellular location is the cell inner membrane. It carries out the reaction sn-glycerol 3-phosphate + an acyl-CoA = a 1-acyl-sn-glycero-3-phosphate + CoA. It functions in the pathway phospholipid metabolism; CDP-diacylglycerol biosynthesis; CDP-diacylglycerol from sn-glycerol 3-phosphate: step 1/3. This Xanthomonas axonopodis pv. citri (strain 306) protein is Glycerol-3-phosphate acyltransferase.